The following is a 101-amino-acid chain: NADH-quinone oxidoreductase subunit K (101 aa).

The next 3 helical transmembrane spans lie at 4 to 24 (LAHY…GIFL), 30 to 50 (IIIL…FVAF), and 61 to 81 (IFVF…LAIL).

The protein belongs to the complex I subunit 4L family. As to quaternary structure, NDH-1 is composed of 14 different subunits. Subunits NuoA, H, J, K, L, M, N constitute the membrane sector of the complex.

It localises to the cell inner membrane. The catalysed reaction is a quinone + NADH + 5 H(+)(in) = a quinol + NAD(+) + 4 H(+)(out). Its function is as follows. NDH-1 shuttles electrons from NADH, via FMN and iron-sulfur (Fe-S) centers, to quinones in the respiratory chain. The immediate electron acceptor for the enzyme in this species is believed to be ubiquinone. Couples the redox reaction to proton translocation (for every two electrons transferred, four hydrogen ions are translocated across the cytoplasmic membrane), and thus conserves the redox energy in a proton gradient. The sequence is that of NADH-quinone oxidoreductase subunit K from Paraburkholderia phymatum (strain DSM 17167 / CIP 108236 / LMG 21445 / STM815) (Burkholderia phymatum).